Reading from the N-terminus, the 69-residue chain is Probable cold shock protein y4cH (69 aa).

Positions 5-65 (GTVKWFNATK…DRKSGKMSAD (61 aa)) constitute a CSD domain.

The protein localises to the cytoplasm. This chain is Probable cold shock protein y4cH, found in Sinorhizobium fredii (strain NBRC 101917 / NGR234).